The primary structure comprises 440 residues: Probable secretory pathway GDP dissociation inhibitor 1 (440 aa).

It belongs to the Rab GDI family.

The protein is Probable secretory pathway GDP dissociation inhibitor 1 (gdi1) of Schizosaccharomyces pombe (strain 972 / ATCC 24843) (Fission yeast).